The following is a 155-amino-acid chain: Endoribonuclease YbeY (155 aa).

3 residues coordinate Zn(2+): His-120, His-124, and His-130.

The protein belongs to the endoribonuclease YbeY family. The cofactor is Zn(2+).

Its subcellular location is the cytoplasm. Its function is as follows. Single strand-specific metallo-endoribonuclease involved in late-stage 70S ribosome quality control and in maturation of the 3' terminus of the 16S rRNA. In Staphylococcus epidermidis (strain ATCC 35984 / DSM 28319 / BCRC 17069 / CCUG 31568 / BM 3577 / RP62A), this protein is Endoribonuclease YbeY.